A 275-amino-acid chain; its full sequence is Polyamine aminopropyltransferase 1 (275 aa).

Positions 2–235 constitute a PABS domain; it reads ELWFTEKQTK…GLWTFTIGSK (234 aa). Gln-31 lines the S-methyl-5'-thioadenosine pocket. Residues His-62 and Asp-86 each coordinate spermidine. Residues Glu-106 and 137–138 each bind S-methyl-5'-thioadenosine; that span reads DG. The active-site Proton acceptor is Asp-155. Residue 155–158 participates in spermidine binding; that stretch reads DSTE. Residue Pro-162 coordinates S-methyl-5'-thioadenosine.

Belongs to the spermidine/spermine synthase family. As to quaternary structure, homodimer or homotetramer.

The protein localises to the cytoplasm. The catalysed reaction is S-adenosyl 3-(methylsulfanyl)propylamine + putrescine = S-methyl-5'-thioadenosine + spermidine + H(+). The protein operates within amine and polyamine biosynthesis; spermidine biosynthesis; spermidine from putrescine: step 1/1. Catalyzes the irreversible transfer of a propylamine group from the amino donor S-adenosylmethioninamine (decarboxy-AdoMet) to putrescine (1,4-diaminobutane) to yield spermidine. This is Polyamine aminopropyltransferase 1 from Bacillus cereus (strain ATCC 14579 / DSM 31 / CCUG 7414 / JCM 2152 / NBRC 15305 / NCIMB 9373 / NCTC 2599 / NRRL B-3711).